Reading from the N-terminus, the 47-residue chain is Delta-stichotoxin-Hcr1d (47 aa).

3 disulfide bridges follow: C3/C43, C5/C33, and C26/C44.

The protein belongs to the sea anemone sodium channel inhibitory toxin family. Type II subfamily.

The protein resides in the secreted. Its subcellular location is the nematocyst. In terms of biological role, binds to site 3 of voltage-gated sodium channels and inhibits the inactivation process. In Radianthus crispa (Leathery sea anemone), this protein is Delta-stichotoxin-Hcr1d.